A 98-amino-acid chain; its full sequence is Integration host factor subunit alpha (98 aa).

Belongs to the bacterial histone-like protein family. As to quaternary structure, heterodimer of an alpha and a beta chain.

Functionally, this protein is one of the two subunits of integration host factor, a specific DNA-binding protein that functions in genetic recombination as well as in transcriptional and translational control. This Marinomonas sp. (strain MWYL1) protein is Integration host factor subunit alpha.